Consider the following 144-residue polypeptide: CYFQNCPRGGKRALSDTELRQCLPCGPGGQGRCFGPSICCADALGCFVGTAEALRCQEENYLPSPCQSGQKPCGSGGRCAANGVCCNDESCVIEPECREEFHRPVRAGDRSNVTQLDGPAGALLLRLMQLAGAPEPQPAAPGGY.

Residues Cys1 and Cys6 are joined by a disulfide bond. At Gly9 the chain carries Glycine amide. Intrachain disulfides connect Cys22/Cys66, Cys25/Cys39, Cys33/Cys56, Cys40/Cys46, Cys73/Cys85, Cys79/Cys97, and Cys86/Cys91. Asn112 carries an N-linked (GlcNAc...) asparagine glycan.

Belongs to the vasopressin/oxytocin family. Interacts with vasopressin receptors V1bR/AVPR1B (Ki=85 pM), V1aR/AVPR1A (Ki=0.6 nM) and V2R/AVPR2 (Ki=4.9 nM). Interacts with oxytocin receptor (OXTR) (Ki=110 nM).

It is found in the secreted. In terms of biological role, neurophysin 2 specifically binds vasopressin. Its function is as follows. Vasopressin has a direct antidiuretic action on the kidney, it also causes vasoconstriction of the peripheral vessels. Acts by binding to vasopressin receptors (V1bR/AVPR1B, V1aR/AVPR1A, and V2R/AVPR2). The polypeptide is Vasopressin-neurophysin 2-copeptin (AVP) (Cavia porcellus (Guinea pig)).